We begin with the raw amino-acid sequence, 343 residues long: D-alanine--D-alanine ligase (343 aa).

The ATP-grasp domain maps to 129–335; it reads KYVLEHFNIK…YSKLIDELIE (207 aa). 162–217 contributes to the ATP binding site; the sequence is ENKLGYAVFIKPSNSGSSVGITKAHNRKELEAGLEEAMKYDRKILVEEALNAREIE. Residues aspartate 288, glutamate 302, and asparagine 304 each coordinate Mg(2+).

It belongs to the D-alanine--D-alanine ligase family. Mg(2+) is required as a cofactor. It depends on Mn(2+) as a cofactor.

It localises to the cytoplasm. It carries out the reaction 2 D-alanine + ATP = D-alanyl-D-alanine + ADP + phosphate + H(+). Its pathway is cell wall biogenesis; peptidoglycan biosynthesis. Cell wall formation. In Clostridium acetobutylicum (strain ATCC 824 / DSM 792 / JCM 1419 / IAM 19013 / LMG 5710 / NBRC 13948 / NRRL B-527 / VKM B-1787 / 2291 / W), this protein is D-alanine--D-alanine ligase.